The sequence spans 342 residues: (Lyso)-N-acylphosphatidylethanolamine lipase (342 aa).

The 255-residue stretch at proline 70 to alanine 324 folds into the AB hydrolase-1 domain.

Belongs to the peptidase S33 family. ABHD4/ABHD5 subfamily.

It carries out the reaction N-hexadecanoyl-1,2-di-(9Z-octadecenoyl)-sn-glycero-3-phosphoethanolamine + H2O = N-hexadecanoyl-1-(9Z-octadecenoyl)-sn-glycero-3-phosphoethanolamine + (9Z)-octadecenoate + H(+). The enzyme catalyses an N-acyl-1,2-diacyl-sn-glycero-3-phosphoethanolamine + H2O = N,1-diacyl-sn-glycero-3-phosphoethanolamine + a fatty acid + H(+). The catalysed reaction is N-hexadecanoyl-1-(9Z-octadecenoyl)-sn-glycero-3-phosphoethanolamine + H2O = N-hexadecanoyl-sn-glycero-3-phosphoethanolamine + (9Z)-octadecenoate + H(+). It catalyses the reaction N-octadecanoyl-1-(9Z-octadecenoyl)-sn-glycero-3-phosphoethanolamine + H2O = N-octadecanoyl-sn-glycero-3-phospho-ethanolamine + (9Z)-octadecenoate + H(+). It carries out the reaction N-eicosanoyl-1-(9Z-octadecenoyl)-sn-glycero-3-phosphoethanolamine + H2O = N-eicosanoyl-sn-glycero-3-phosphoethanolamine + (9Z)-octadecenoate + H(+). The enzyme catalyses N,1-di-(9Z-octadecenoyl)-sn-glycero-3-phosphoethanolamine + H2O = N-(9Z-octadecenoyl)-sn-glycero-3-phosphoethanolamine + (9Z)-octadecenoate + H(+). The catalysed reaction is N-(5Z,8Z,11Z,14Z-eicosatetraenoyl)-1-(9Z-octadecenoyl)-sn-glycero-3-phosphoethanolamine + H2O = N-(5Z,8Z,11Z,14Z-eicosatetraenoyl)-sn-glycero-3-phosphoethanolamine + (9Z)-octadecenoate + H(+). It catalyses the reaction 1-octadecanoyl-2-(9Z-octadecenoyl)-sn-glycero-3-phospho-(N-hexadecanoyl)-serine + H2O = 1-octadecanoyl-2-hydroxy-sn-glycero-3-phospho-(N-hexadecanoyl)-serine + (9Z)-octadecenoate + H(+). It carries out the reaction 1-O-(1Z-octadecenoyl)-2-(9Z-octadecenoyl)-sn-glycero-3-phospho-N-hexadecanoyl-ethanolamine + H2O = 1-O-(1Z-octadecenyl)-sn-glycero-3-phospho-N-hexadecanoyl-ethanolamine + (9Z)-octadecenoate + H(+). The enzyme catalyses N,1-diacyl-sn-glycero-3-phosphoethanolamine + H2O = N-acyl-sn-glycero-3-phosphoethanolamine + a fatty acid + H(+). In terms of biological role, lysophospholipase selective for N-acyl phosphatidylethanolamine (NAPE). Contributes to the biosynthesis of N-acyl ethanolamines, including the endocannabinoid anandamide by hydrolyzing the sn-1 and sn-2 acyl chains from N-acyl phosphatidylethanolamine (NAPE) generating glycerophospho-N-acyl ethanolamine (GP-NAE), an intermediate for N-acyl ethanolamine biosynthesis. Hydrolyzes substrates bearing saturated, monounsaturated, polyunsaturated N-acyl chains. Shows no significant activity towards other lysophospholipids, including lysophosphatidylcholine, lysophosphatidylethanolamine and lysophosphatidylserine. In Bos taurus (Bovine), this protein is (Lyso)-N-acylphosphatidylethanolamine lipase.